A 360-amino-acid chain; its full sequence is Ribosomal RNA large subunit methyltransferase F (360 aa).

Positions 1 to 38 (MTRSTTPPMRAKHSSAKRSPSRSAAKVNPVSVKPNKPL) are disordered. Positions 10-20 (RAKHSSAKRSP) are enriched in basic residues.

The protein belongs to the methyltransferase superfamily. METTL16/RlmF family.

It localises to the cytoplasm. The enzyme catalyses adenosine(1618) in 23S rRNA + S-adenosyl-L-methionine = N(6)-methyladenosine(1618) in 23S rRNA + S-adenosyl-L-homocysteine + H(+). Its function is as follows. Specifically methylates the adenine in position 1618 of 23S rRNA. The sequence is that of Ribosomal RNA large subunit methyltransferase F from Shewanella frigidimarina (strain NCIMB 400).